Reading from the N-terminus, the 208-residue chain is Adenylyl-sulfate kinase 3 (208 aa).

Residue 37-45 (GLSGSGKST) coordinates ATP. Substrate is bound by residues D67, R70, R84, N87, 110–111 (IS), and G160. S111 serves as the catalytic Phosphoserine intermediate.

It belongs to the APS kinase family. In terms of tissue distribution, expressed in root vasculature, root tips, leaf epidermal and guard cells, pollen grains and radicle of immature seeds.

It is found in the cytoplasm. It localises to the cytosol. The catalysed reaction is adenosine 5'-phosphosulfate + ATP = 3'-phosphoadenylyl sulfate + ADP + H(+). The protein operates within sulfur metabolism; hydrogen sulfide biosynthesis; sulfite from sulfate: step 2/3. In terms of biological role, catalyzes the synthesis of activated sulfate for the sulfation of secondary metabolites, including the glucosinolates. Essential for plant reproduction and viability. The polypeptide is Adenylyl-sulfate kinase 3 (Arabidopsis thaliana (Mouse-ear cress)).